Reading from the N-terminus, the 91-residue chain is Aspartyl/glutamyl-tRNA(Asn/Gln) amidotransferase subunit C (91 aa).

The interval 68–91 (LDQDDALANAPETEDGRFKGPNVS) is disordered.

It belongs to the GatC family. In terms of assembly, heterotrimer of A, B and C subunits.

The enzyme catalyses L-glutamyl-tRNA(Gln) + L-glutamine + ATP + H2O = L-glutaminyl-tRNA(Gln) + L-glutamate + ADP + phosphate + H(+). It catalyses the reaction L-aspartyl-tRNA(Asn) + L-glutamine + ATP + H2O = L-asparaginyl-tRNA(Asn) + L-glutamate + ADP + phosphate + 2 H(+). Its function is as follows. Allows the formation of correctly charged Asn-tRNA(Asn) or Gln-tRNA(Gln) through the transamidation of misacylated Asp-tRNA(Asn) or Glu-tRNA(Gln) in organisms which lack either or both of asparaginyl-tRNA or glutaminyl-tRNA synthetases. The reaction takes place in the presence of glutamine and ATP through an activated phospho-Asp-tRNA(Asn) or phospho-Glu-tRNA(Gln). This chain is Aspartyl/glutamyl-tRNA(Asn/Gln) amidotransferase subunit C, found in Halobacterium salinarum (strain ATCC 29341 / DSM 671 / R1).